The sequence spans 292 residues: D-tagatose-1,6-bisphosphate aldolase subunit KbaY (292 aa).

Catalysis depends on D82, which acts as the Proton donor. Zn(2+) contacts are provided by H83 and H180. G181 provides a ligand contact to dihydroxyacetone phosphate. A Zn(2+)-binding site is contributed by H208. Dihydroxyacetone phosphate-binding positions include 209–211 (GAS) and 230–233 (NVAT).

It belongs to the class II fructose-bisphosphate aldolase family. TagBP aldolase KbaY subfamily. Homotetramer. Forms a complex with KbaZ. Zn(2+) is required as a cofactor.

It carries out the reaction D-tagatofuranose 1,6-bisphosphate = D-glyceraldehyde 3-phosphate + dihydroxyacetone phosphate. The protein operates within carbohydrate metabolism; D-tagatose 6-phosphate degradation; D-glyceraldehyde 3-phosphate and glycerone phosphate from D-tagatose 6-phosphate: step 2/2. Its function is as follows. Catalytic subunit of the tagatose-1,6-bisphosphate aldolase KbaYZ, which catalyzes the reversible aldol condensation of dihydroxyacetone phosphate (DHAP or glycerone-phosphate) with glyceraldehyde 3-phosphate (G3P) to produce tagatose 1,6-bisphosphate (TBP). Requires KbaZ subunit for full activity and stability. The polypeptide is D-tagatose-1,6-bisphosphate aldolase subunit KbaY (Enterobacter sp. (strain 638)).